The chain runs to 62 residues: Large ribosomal subunit protein uL29 (62 aa).

It belongs to the universal ribosomal protein uL29 family.

The polypeptide is Large ribosomal subunit protein uL29 (Helicobacter hepaticus (strain ATCC 51449 / 3B1)).